A 1038-amino-acid polypeptide reads, in one-letter code: Rap guanine nucleotide exchange factor 1 (1038 aa).

An a nucleoside 3',5'-cyclic phosphate-binding site is contributed by 10–140; it reads RLSPLHTFSD…DILTDETPSD (131 aa). The DEP domain occupies 234–316; that stretch reads TDNHQVIRDI…KTNSYYRWVQ (83 aa). 375-492 contributes to the a nucleoside 3',5'-cyclic phosphate binding site; that stretch reads ALSHLSTMVK…VRLKDYGEDV (118 aa). One can recognise an N-terminal Ras-GEF domain in the interval 516–654; the sequence is CGYSVMAGKA…DILTRIGSIR (139 aa). One can recognise a Ras-GEF domain in the interval 795-1028; it reads DSQELAHQLF…MQLSYEIEPK (234 aa).

As to quaternary structure, interacts (via C-terminus) with drn-1. In terms of tissue distribution, expressed specifically in neurons including the nerve ring, ventral and dorsal nerve cord motor neurons and tail ganglia.

Guanine nucleotide-releasing protein. Together with GTPase drn-1, may regulate acetylcholine release at the neuromuscular junctions probably downstream of G-protein gsa-1 and adenylate cyclase acy-1. This chain is Rap guanine nucleotide exchange factor 1 (epac-1), found in Caenorhabditis elegans.